A 407-amino-acid polypeptide reads, in one-letter code: uncharacterized protein (407 aa).

A run of 12 helical transmembrane segments spans residues isoleucine 22 to valine 42, leucine 51 to alanine 71, alanine 101 to valine 121, valine 126 to valine 146, valine 154 to valine 174, alanine 179 to leucine 199, glycine 227 to tyrosine 247, leucine 258 to isoleucine 278, valine 286 to valine 306, valine 309 to glycine 329, alanine 347 to alanine 367, and alanine 369 to leucine 389.

This sequence belongs to the major facilitator superfamily. YhhS family.

It localises to the cell inner membrane. This is an uncharacterized protein from Burkholderia mallei (strain NCTC 10229).